The chain runs to 171 residues: MPGIAEESIAERTRRVLEPVLARDGYELVEVEWLRQGSRWTLRLFVDKPGGVGIEDCQAVSRLVDPILDVEDFIEPAYDLEVSSPGLDRPLRKPADFDRYAGQRAHVKAYGPVAGTAPGSPARKNWTGVLVGYRDGAVEIDVDGVVHRVPHDQIAKAHLEYDFEADLRRKD.

Belongs to the RimP family.

The protein resides in the cytoplasm. Functionally, required for maturation of 30S ribosomal subunits. This Anaeromyxobacter sp. (strain Fw109-5) protein is Ribosome maturation factor RimP.